The sequence spans 505 residues: Trans-cinnamate 4-monooxygenase (505 aa).

The helical transmembrane segment at 3-23 (LLLLEKTLLALFLAAITAITI) threads the bilayer. Residues 213–218 (RSRLAQ) and alanine 306 each bind (E)-cinnamate. Residue cysteine 447 participates in heme binding.

It belongs to the cytochrome P450 family. Requires heme as cofactor.

The protein localises to the membrane. The catalysed reaction is (E)-cinnamate + reduced [NADPH--hemoprotein reductase] + O2 = (E)-4-coumarate + oxidized [NADPH--hemoprotein reductase] + H2O + H(+). It functions in the pathway phenylpropanoid metabolism; trans-4-coumarate biosynthesis; trans-4-coumarate from trans-cinnamate: step 1/1. Catalyzes the first oxidative step of the phenylpropanoid pathway in higher plants by transforming trans-cinnamate into p-coumarate. The compounds formed by this pathway are essential components for lignification, pollination, and defense against ultraviolet light, predators and pathogens. The protein is Trans-cinnamate 4-monooxygenase (CYP73A9) of Pisum sativum (Garden pea).